A 319-amino-acid polypeptide reads, in one-letter code: Protein StrN (319 aa).

It participates in antibiotic biosynthesis; streptomycin biosynthesis. The sequence is that of Protein StrN (strN) from Streptomyces griseus.